A 361-amino-acid polypeptide reads, in one-letter code: Nicotinate-nucleotide--dimethylbenzimidazole phosphoribosyltransferase (361 aa).

Catalysis depends on glutamate 320, which acts as the Proton acceptor.

It belongs to the CobT family. Homodimer.

The catalysed reaction is 5,6-dimethylbenzimidazole + nicotinate beta-D-ribonucleotide = alpha-ribazole 5'-phosphate + nicotinate + H(+). Its pathway is nucleoside biosynthesis; alpha-ribazole biosynthesis; alpha-ribazole from 5,6-dimethylbenzimidazole: step 1/2. In terms of biological role, catalyzes the synthesis of alpha-ribazole-5'-phosphate from nicotinate mononucleotide (NAMN) and 5,6-dimethylbenzimidazole (DMB). The chain is Nicotinate-nucleotide--dimethylbenzimidazole phosphoribosyltransferase from Shigella boydii serotype 18 (strain CDC 3083-94 / BS512).